Reading from the N-terminus, the 282-residue chain is Diaminopimelate epimerase (282 aa).

3 residues coordinate substrate: Asn-13, Gln-45, and Asn-64. Cys-73 (proton donor) is an active-site residue. Residues 74–75 (GN), Asn-155, Asn-189, and 207–208 (ER) contribute to the substrate site. The active-site Proton acceptor is Cys-216. 217 to 218 (GS) is a binding site for substrate.

This sequence belongs to the diaminopimelate epimerase family. Homodimer.

The protein resides in the cytoplasm. The catalysed reaction is (2S,6S)-2,6-diaminopimelate = meso-2,6-diaminopimelate. It participates in amino-acid biosynthesis; L-lysine biosynthesis via DAP pathway; DL-2,6-diaminopimelate from LL-2,6-diaminopimelate: step 1/1. Functionally, catalyzes the stereoinversion of LL-2,6-diaminopimelate (L,L-DAP) to meso-diaminopimelate (meso-DAP), a precursor of L-lysine and an essential component of the bacterial peptidoglycan. The protein is Diaminopimelate epimerase of Bartonella bacilliformis (strain ATCC 35685 / KC583 / Herrer 020/F12,63).